The primary structure comprises 170 residues: Photosystem I assembly protein Ycf3 (170 aa).

TPR repeat units follow at residues 35–68 (AFTYYRDGMLAQSEGNYAEALQNYYEATRLEIDP), 72–105 (SYILYNIGLIHTSNGEHTKALEYYFRALERNPFL), and 120–153 (GEQAILQGDSEIAEAWFDQAAEYWKQAIALTPGN).

The protein belongs to the Ycf3 family.

Its subcellular location is the plastid. The protein resides in the chloroplast thylakoid membrane. Its function is as follows. Essential for the assembly of the photosystem I (PSI) complex. May act as a chaperone-like factor to guide the assembly of the PSI subunits. In Agrostis stolonifera (Creeping bentgrass), this protein is Photosystem I assembly protein Ycf3.